The primary structure comprises 534 residues: MLRYLLIPILYLQVVLGVLSEVLPSLKPSVVPKNTSLLSGRGVFRQLIDHTHPEVGTFSQKYWFNTTYWGGPGSPIIFYTPGQHPATNRLYYLTDTTLPGLIAKEVRGAVVLVEHRYFGESQPFDNLSTSNLQYLALDQVLADFVHFARTVELPFDLSGNSHPLRTPWIWVGNSYSATLVAWTERLFPNTFWAYYASGAAVNSMQDFWQFNYPTQQGMPQSCRSNLEAIISHVDNVFLSGSPEQKQELKIRFGLQDLSLLEDTAYALSQPIIGWTLIQPSDTHTQFSEMCNAIENANFSSSRRDFGSKTNFQTVLDNYADWFKTSYLPRLCERPNYSGWTGRNSVQCLDTVNLSSQAFHDLSVQNDDRVWDWIACNYFFFWQTGSPIDTPTIFSRLIDPVYYERRCRLIFPKEGNATYGIAAGVTDKSMNALTGGWNRTGKRILFTNGEFDPWRSASVSSVFRPDGPMQSTSQQPIILIKGVQHQADMYVRNRINKEVREAMDTGIAQISRWVLDFYTENSKTLAHDLQGFCVH.

A signal peptide spans 1-17; the sequence is MLRYLLIPILYLQVVLG. N-linked (GlcNAc...) asparagine glycans are attached at residues Asn34, Asn65, and Asn126. The Charge relay system role is filled by Ser174. N-linked (GlcNAc...) asparagine glycosylation is found at Asn297, Asn335, Asn352, Asn415, and Asn437. Residue Asp451 is the Charge relay system of the active site.

Belongs to the peptidase S28 family.

It participates in mycotoxin biosynthesis. Serine protease, part of the gene cluster that mediates the biosynthesis of the secondary metabolite victorin, the molecular basis for Victoria blight of oats. Within the pathway, vicPa and vicPb are probably involved in the processing of the vicA1 and vicA2 precursors. The pathway starts with the processing of the precursor vicA1 by several endopeptidases including kexin proteases as well as the cluster-specific S28 family peptidases vicPa and vicPb to produce 7 identical copies of the hexapeptide Gly-Leu-Lys-Leu-Ala-Phe. After being excised from the precursor peptide, the core peptides are cyclized and modified post-translationally by enzymes encoded within the gene cluster. The ustYa family oxidase vicYb is required for the formation of the macrocycle in victorin and the copper amine oxidases (CAOs) vicK1 and vicK2 are responsible for converting victorin to the active form by oxidizing the N-terminal glycyl residue in the peptides to glyoxylate. Relaxed substrate specificity of enzymes in the victorin biosynthetic pathway results in a metabolic grid that produces a set of analogs including victorinines B, C, E or HV-toxin M. This chain is Serine protease vicPb, found in Bipolaris victoriae (strain FI3) (Victoria blight of oats agent).